The chain runs to 182 residues: ATP-dependent protease subunit HslV (182 aa).

T10 is an active-site residue. A166, C169, and S172 together coordinate Na(+).

Belongs to the peptidase T1B family. HslV subfamily. As to quaternary structure, a double ring-shaped homohexamer of HslV is capped on each side by a ring-shaped HslU homohexamer. The assembly of the HslU/HslV complex is dependent on binding of ATP.

The protein resides in the cytoplasm. It catalyses the reaction ATP-dependent cleavage of peptide bonds with broad specificity.. Allosterically activated by HslU binding. Functionally, protease subunit of a proteasome-like degradation complex believed to be a general protein degrading machinery. This chain is ATP-dependent protease subunit HslV, found in Rickettsia typhi (strain ATCC VR-144 / Wilmington).